A 76-amino-acid chain; its full sequence is Acyl carrier protein (76 aa).

The Carrier domain occupies 1-74 (MEERIKEIIA…DVINYIKEKK (74 aa)). Ser34 is modified (O-(pantetheine 4'-phosphoryl)serine).

The protein belongs to the acyl carrier protein (ACP) family. 4'-phosphopantetheine is transferred from CoA to a specific serine of apo-ACP by AcpS. This modification is essential for activity because fatty acids are bound in thioester linkage to the sulfhydryl of the prosthetic group.

The protein localises to the cytoplasm. The protein operates within lipid metabolism; fatty acid biosynthesis. Its function is as follows. Carrier of the growing fatty acid chain in fatty acid biosynthesis. The polypeptide is Acyl carrier protein (Persephonella marina (strain DSM 14350 / EX-H1)).